The chain runs to 573 residues: MSDVTQQKKRKRSKGEVNPSKPTVDEEITDPSSNEDEQLEVSDEEDALESEEEFEGENPADKRRRLAKQYLENLKSEANDILTDNRNAEEKDLNNLKERTIDEYNNFDAGDLDKDIIASRLKEDVAEQQGRVFRYFGDKLLISEAKQSFTRVGENNLTCISCFQPVLNKYTFEESSNGDKNKGRLFAYTVSKDLQLTKYDITDFSKRPKKLKYAKGGAKYIPTSKHEYENTTEGHYDEILTVAASPDGKYVVTGGRDRKLIVWSTESLSPVKVIPTKDRRGEVLSLAFRKNSDQLYASCADFKIRTYSINQFSQLEILYGHHDIVEDISALAMERCVTVGARDRTAMLWKIPDETRLTFRGGDEPQKLLRRWMKENAKEGEDGEVKYPDESEAPLFFCEGSIDVVSMVDDFHFITGSDNGNICLWSLAKKKPIFTERIAHGILPEPSFNDISGETDEELRKRQLQGKKLLQPFWITSLYAIPYSNVFISGSWSGSLKVWKISDNLRSFELLGELSGAKGVVTKIQVVESGKHGKEKFRILASIAKEHRLGRWIANVSGARNGIYSAVIDQTGF.

The tract at residues 1-63 (MSDVTQQKKR…FEGENPADKR (63 aa)) is disordered. Ser2 carries the post-translational modification N-acetylserine. Positions 25 to 58 (DEEITDPSSNEDEQLEVSDEEDALESEEEFEGEN) are enriched in acidic residues. Residues 32–106 (SSNEDEQLEV…KERTIDEYNN (75 aa)) adopt a coiled-coil conformation. Ser50 carries the phosphoserine modification. WD repeat units follow at residues 234–273 (GHYDEILTVAASPDGKYVVTGGRDRKLIVWSTESLSPVKV), 278–317 (DRRGEVLSLAFRKNSDQLYASCADFKIRTYSINQFSQLEI), 320–359 (GHHDIVEDISALAMERCVTVGARDRTAMLWKIPDETRLTF), 397–435 (FCEGSIDVVSMVDDFHFITGSDNGNICLWSLAKKKPIFT), 471–509 (QPFWITSLYAIPYSNVFISGSWSGSLKVWKISDNLRSFE), and 516–562 (GAKG…ARNG).

The protein belongs to the WD repeat RRP9 family. As to quaternary structure, interacts with UTP25. Component of the ribosomal small subunit (SSU) processome composed of at least 40 protein subunits and snoRNA U3.

The protein resides in the nucleus. It localises to the nucleolus. In terms of biological role, involved in nucleolar processing of pre-18S ribosomal RNA. Required for efficient pre-rRNA cleavage at sites A0, A1 and A2, and biosynthesis of 18S rRNA. The sequence is that of Ribosomal RNA-processing protein 9 (RRP9) from Saccharomyces cerevisiae (strain ATCC 204508 / S288c) (Baker's yeast).